A 371-amino-acid polypeptide reads, in one-letter code: GTPase Obg (371 aa).

The Obg domain occupies 1–159; that stretch reads MKFLDQAKVY…KTIWLRLKLI (159 aa). One can recognise an OBG-type G domain in the interval 160–327; it reads ADAGLVGLPN…VLRALRDIIV (168 aa). Residues 166-173, 191-195, 212-215, 279-282, and 308-310 contribute to the GTP site; these read GLPNAGKS, FTTLH, DIPG, SQID, and SAI. Positions 173 and 193 each coordinate Mg(2+). The segment at 337 to 371 is disordered; sequence APMKALKVRHRDMQSSGNEGESEDNSDRDDEEQQG. Over residues 356–371 the composition is skewed to acidic residues; it reads GESEDNSDRDDEEQQG.

This sequence belongs to the TRAFAC class OBG-HflX-like GTPase superfamily. OBG GTPase family. Monomer. The cofactor is Mg(2+).

It localises to the cytoplasm. Its function is as follows. An essential GTPase which binds GTP, GDP and possibly (p)ppGpp with moderate affinity, with high nucleotide exchange rates and a fairly low GTP hydrolysis rate. Plays a role in control of the cell cycle, stress response, ribosome biogenesis and in those bacteria that undergo differentiation, in morphogenesis control. The polypeptide is GTPase Obg (Rhizobium rhizogenes (strain K84 / ATCC BAA-868) (Agrobacterium radiobacter)).